The chain runs to 500 residues: Cobyric acid synthase (500 aa).

The GATase cobBQ-type domain occupies 251 to 449 (KLNIVIPIMP…LHGVFDHPDA (199 aa)). The active-site Nucleophile is cysteine 332. Histidine 441 is an active-site residue.

The protein belongs to the CobB/CobQ family. CobQ subfamily.

The protein operates within cofactor biosynthesis; adenosylcobalamin biosynthesis. Functionally, catalyzes amidations at positions B, D, E, and G on adenosylcobyrinic A,C-diamide. NH(2) groups are provided by glutamine, and one molecule of ATP is hydrogenolyzed for each amidation. In Marinomonas sp. (strain MWYL1), this protein is Cobyric acid synthase.